The chain runs to 303 residues: Mitochondrial carrier homolog 2 (303 aa).

A2 carries the post-translational modification N-acetylalanine. The Mitochondrial intermembrane segment spans residues 2–15 (ADAASQVLLGSGLT). Solcar repeat units follow at residues 2–98 (ADAA…YQES) and 118–206 (DHVI…VNTY). A helical membrane pass occupies residues 16-36 (ILSQPLMYVKVLIQVGYEPLP). Residues 37 to 77 (PTIGRNIFGRQVCQLPGLFSYAQHIASIDGRRGLFTGLTPR) lie on the Cytoplasmic side of the membrane. The helical transmembrane segment at 78 to 92 (LCSGVLGTVVHGKVL) threads the bilayer. Residues 93–135 (QHYQESDKGEELGPGNVQKEVSSSFDHVIKETTREMIARSAAT) lie on the Mitochondrial intermembrane side of the membrane. Residues 136–156 (LITHPFHVITLRSMVQFIGRE) form a helical membrane-spanning segment. At 157–180 (SKYCGLCDSIITIYREEGILGFFA) the chain is on the cytoplasmic side. The chain crosses the membrane as a helical span at residues 181 to 199 (GLVPRLLGDILSLWLCNSL). Topologically, residues 200–231 (AYLVNTYALDSGVSTMNEMKSYSQAVTGFFAS) are mitochondrial intermembrane. The chain crosses the membrane as a helical span at residues 232 to 252 (MLTYPFVLVSNLMAVNNCGLA). Residues 253-280 (GGCPPYSPIYTSWIDCWCMLQKEGNMSR) lie on the Cytoplasmic side of the membrane. A helical membrane pass occupies residues 281–303 (GNSLFFRKVPFGKTYCCDLKMLI).

This sequence belongs to the mitochondrial carrier (TC 2.A.29) family. In terms of assembly, interacts with p15BID.

It localises to the mitochondrion outer membrane. Functionally, protein insertase that mediates insertion of transmembrane proteins into the mitochondrial outer membrane. Catalyzes insertion of proteins with alpha-helical transmembrane regions, such as signal-anchored, tail-anchored and multi-pass membrane proteins. Does not mediate insertion of beta-barrel transmembrane proteins. Also acts as a receptor for the truncated form of pro-apoptotic BH3-interacting domain death agonist (p15 BID) and has therefore a critical function in apoptosis. Regulates the quiescence/cycling of hematopoietic stem cells (HSCs). Acts as a regulator of mitochondrial fusion, essential for the naive-to-primed interconversion of embryonic stem cells (ESCs). Acts as a regulator of lipid homeostasis and has a regulatory role in adipocyte differentiation and biology. The protein is Mitochondrial carrier homolog 2 of Homo sapiens (Human).